We begin with the raw amino-acid sequence, 170 residues long: Lipoprotein signal peptidase (170 aa).

The next 3 membrane-spanning stretches (helical) occupy residues 13 to 33, 72 to 92, and 96 to 113; these read IFISILVFFDQWSKYLVVKYI, LFFLIIPIIILIFVFSFALKE, and IARIALVLILSGGIGNII. Active-site residues include D124 and D146. A helical membrane pass occupies residues 142–162; it reads FNFADSYVVIGITLFIIYDLF.

It belongs to the peptidase A8 family.

It is found in the cell inner membrane. It catalyses the reaction Release of signal peptides from bacterial membrane prolipoproteins. Hydrolyzes -Xaa-Yaa-Zaa-|-(S,diacylglyceryl)Cys-, in which Xaa is hydrophobic (preferably Leu), and Yaa (Ala or Ser) and Zaa (Gly or Ala) have small, neutral side chains.. It functions in the pathway protein modification; lipoprotein biosynthesis (signal peptide cleavage). This protein specifically catalyzes the removal of signal peptides from prolipoproteins. The polypeptide is Lipoprotein signal peptidase (Borrelia turicatae (strain 91E135)).